The sequence spans 229 residues: 2-C-methyl-D-erythritol 4-phosphate cytidylyltransferase (229 aa).

The protein belongs to the IspD/TarI cytidylyltransferase family. IspD subfamily.

It catalyses the reaction 2-C-methyl-D-erythritol 4-phosphate + CTP + H(+) = 4-CDP-2-C-methyl-D-erythritol + diphosphate. It participates in isoprenoid biosynthesis; isopentenyl diphosphate biosynthesis via DXP pathway; isopentenyl diphosphate from 1-deoxy-D-xylulose 5-phosphate: step 2/6. Its function is as follows. Catalyzes the formation of 4-diphosphocytidyl-2-C-methyl-D-erythritol from CTP and 2-C-methyl-D-erythritol 4-phosphate (MEP). This chain is 2-C-methyl-D-erythritol 4-phosphate cytidylyltransferase, found in Neisseria gonorrhoeae (strain ATCC 700825 / FA 1090).